Here is a 265-residue protein sequence, read N- to C-terminus: 5'-nucleotidase SurE (265 aa).

Residues Asp-8, Asp-9, Ser-39, and Asn-96 each contribute to the a divalent metal cation site.

The protein belongs to the SurE nucleotidase family. Requires a divalent metal cation as cofactor.

It localises to the cytoplasm. It catalyses the reaction a ribonucleoside 5'-phosphate + H2O = a ribonucleoside + phosphate. Functionally, nucleotidase that shows phosphatase activity on nucleoside 5'-monophosphates. This is 5'-nucleotidase SurE from Rubrobacter xylanophilus (strain DSM 9941 / JCM 11954 / NBRC 16129 / PRD-1).